The primary structure comprises 254 residues: Ribosomal RNA small subunit methyltransferase G (254 aa).

S-adenosyl-L-methionine-binding positions include glycine 84, phenylalanine 89, 136 to 137 (VE), and arginine 155.

This sequence belongs to the methyltransferase superfamily. RNA methyltransferase RsmG family.

It localises to the cytoplasm. Functionally, specifically methylates the N7 position of a guanine in 16S rRNA. The sequence is that of Ribosomal RNA small subunit methyltransferase G from Synechococcus sp. (strain CC9311).